We begin with the raw amino-acid sequence, 103 residues long: Co-chaperonin GroES (103 aa).

Belongs to the GroES chaperonin family. As to quaternary structure, heptamer of 7 subunits arranged in a ring. Interacts with the chaperonin GroEL.

The protein localises to the cytoplasm. Its function is as follows. Together with the chaperonin GroEL, plays an essential role in assisting protein folding. The GroEL-GroES system forms a nano-cage that allows encapsulation of the non-native substrate proteins and provides a physical environment optimized to promote and accelerate protein folding. GroES binds to the apical surface of the GroEL ring, thereby capping the opening of the GroEL channel. In Synechococcus elongatus (strain ATCC 33912 / PCC 7942 / FACHB-805) (Anacystis nidulans R2), this protein is Co-chaperonin GroES.